Consider the following 264-residue polypeptide: ATP synthase subunit a (264 aa).

A run of 6 helical transmembrane segments spans residues 29 to 49 (TWHI…LWIF), 87 to 107 (NALI…MNFM), 134 to 154 (DVNI…YYSI), 177 to 197 (IPVN…SLAL), 208 to 228 (LIFI…SLGV), and 235 to 255 (LIFH…LTIV).

This sequence belongs to the ATPase A chain family. F-type ATPases have 2 components, CF(1) - the catalytic core - and CF(0) - the membrane proton channel. CF(1) has five subunits: alpha(3), beta(3), gamma(1), delta(1), epsilon(1). CF(0) has three main subunits: a(1), b(2) and c(9-12). The alpha and beta chains form an alternating ring which encloses part of the gamma chain. CF(1) is attached to CF(0) by a central stalk formed by the gamma and epsilon chains, while a peripheral stalk is formed by the delta and b chains.

It is found in the cell inner membrane. In terms of biological role, key component of the proton channel; it plays a direct role in the translocation of protons across the membrane. This chain is ATP synthase subunit a, found in Shewanella sp. (strain ANA-3).